Reading from the N-terminus, the 374-residue chain is Tryptophan--tRNA ligase (374 aa).

A 'HIGH' region motif is present at residues 71-79; that stretch reads PSGRMHLGH. The short motif at 247–251 is the 'KMSKS' region element; sequence KMSSS.

This sequence belongs to the class-I aminoacyl-tRNA synthetase family.

Its subcellular location is the cytoplasm. It catalyses the reaction tRNA(Trp) + L-tryptophan + ATP = L-tryptophyl-tRNA(Trp) + AMP + diphosphate + H(+). This chain is Tryptophan--tRNA ligase, found in Methanopyrus kandleri (strain AV19 / DSM 6324 / JCM 9639 / NBRC 100938).